A 656-amino-acid polypeptide reads, in one-letter code: Chaperone protein DnaK (656 aa).

The residue at position 204 (threonine 204) is a Phosphothreonine; by autocatalysis. The tract at residues 602-656 (KLAERVYAKKGGAAGAPPGGEAEGEPQAQAGGKKEDVVDAEFEEVKDEKKKDEDK) is disordered. Over residues 620-632 (GGEAEGEPQAQAG) the composition is skewed to low complexity. The segment covering 647 to 656 (KDEKKKDEDK) has biased composition (basic and acidic residues).

Belongs to the heat shock protein 70 family.

In terms of biological role, acts as a chaperone. The polypeptide is Chaperone protein DnaK (Coxiella burnetii (strain CbuG_Q212) (Coxiella burnetii (strain Q212))).